The chain runs to 565 residues: NAD-dependent malic enzyme (565 aa).

Residue tyrosine 104 is the Proton donor of the active site. Position 157 (arginine 157) interacts with NAD(+). Residue lysine 175 is the Proton acceptor of the active site. A divalent metal cation is bound by residues glutamate 246, aspartate 247, and aspartate 270. NAD(+) contacts are provided by aspartate 270 and asparagine 418.

Belongs to the malic enzymes family. Homotetramer. The cofactor is Mg(2+). Mn(2+) serves as cofactor.

The enzyme catalyses (S)-malate + NAD(+) = pyruvate + CO2 + NADH. The catalysed reaction is oxaloacetate + H(+) = pyruvate + CO2. The protein is NAD-dependent malic enzyme of Pectobacterium atrosepticum (strain SCRI 1043 / ATCC BAA-672) (Erwinia carotovora subsp. atroseptica).